We begin with the raw amino-acid sequence, 718 residues long: Kelch-like protein 4 (718 aa).

The disordered stretch occupies residues 46–69 (TPVQGRLKSHSRDRNGLKKSNSPV). A BTB domain is found at 182–249 (CDVLLIAGHL…AYTGVLQLKE (68 aa)). Kelch repeat units lie at residues 430 to 476 (ALYA…VIDN), 477 to 523 (KLYV…TLEG), 525 to 570 (MYAV…ALNN), 571 to 617 (KLYA…TYNG), 619 to 670 (LYVV…PLGD), and 671 to 717 (KLYV…VVKL).

Expressed in adult fibroblasts and in a range of fetal tissues including tongue, palate, and mandible.

It is found in the cytoplasm. The protein resides in the cytoskeleton. This chain is Kelch-like protein 4 (KLHL4), found in Homo sapiens (Human).